The primary structure comprises 492 residues: N-succinylglutamate 5-semialdehyde dehydrogenase (492 aa).

220-225 (GSSTTG) contributes to the NAD(+) binding site. Active-site residues include Glu-243 and Cys-277.

This sequence belongs to the aldehyde dehydrogenase family. AstD subfamily.

It catalyses the reaction N-succinyl-L-glutamate 5-semialdehyde + NAD(+) + H2O = N-succinyl-L-glutamate + NADH + 2 H(+). The protein operates within amino-acid degradation; L-arginine degradation via AST pathway; L-glutamate and succinate from L-arginine: step 4/5. Catalyzes the NAD-dependent reduction of succinylglutamate semialdehyde into succinylglutamate. The protein is N-succinylglutamate 5-semialdehyde dehydrogenase of Klebsiella pneumoniae subsp. pneumoniae (strain ATCC 700721 / MGH 78578).